A 308-amino-acid polypeptide reads, in one-letter code: UDP-N-acetylenolpyruvoylglucosamine reductase (308 aa).

The region spanning 30–213 is the FAD-binding PCMH-type domain; sequence RVGGAAEWFI…KATTQSHLDH (184 aa). Arginine 176 is an active-site residue. Serine 227 functions as the Proton donor in the catalytic mechanism. The active site involves glutamate 297.

The protein belongs to the MurB family. Requires FAD as cofactor.

It localises to the cytoplasm. It catalyses the reaction UDP-N-acetyl-alpha-D-muramate + NADP(+) = UDP-N-acetyl-3-O-(1-carboxyvinyl)-alpha-D-glucosamine + NADPH + H(+). It participates in cell wall biogenesis; peptidoglycan biosynthesis. Functionally, cell wall formation. This Acaryochloris marina (strain MBIC 11017) protein is UDP-N-acetylenolpyruvoylglucosamine reductase.